The sequence spans 469 residues: Keratin, type II cytoskeletal 7 (469 aa).

Serine 2 bears the N-acetylserine mark. Serine 2, serine 6, and serine 7 each carry phosphoserine. Residues 2 to 90 (SIHFSSPVFT…DPSLQRVRQE (89 aa)) form a head region. A glycan (O-linked (GlcNAc) serine) is linked at serine 12. A Dimethylated arginine; alternate modification is found at arginine 20. Arginine 20 is modified (omega-N-methylarginine; alternate). Serine 53, serine 71, and serine 83 each carry phosphoserine. A coil 1A region spans residues 90–126 (EEREQIKTLNNKFASFIDKVRFLEQQNKLLETKWTLL). In terms of domain architecture, IF rod spans 91–403 (EREQIKTLNN…KLLEGEESRL (313 aa)). Residue threonine 97 is modified to Phosphothreonine. The tract at residues 127-144 (QEQKSAKSSRLPDIFEAQ) is linker 1. Lysine 130 is covalently cross-linked (Glycyl lysine isopeptide (Lys-Gly) (interchain with G-Cter in SUMO2)). The coil 1B stretch occupies residues 145-236 (IAGLRGQLEA…TLNETELTEL (92 aa)). At lysine 179 the chain carries N6-acetyllysine. Residues 237–260 (QSQISDTSVVLSMDNSRSLDLDGI) form a linker 12 region. Serine 252 and serine 254 each carry phosphoserine. Positions 261–399 (IAEVKAQYEE…ATYRKLLEGE (139 aa)) are coil 2. Glycyl lysine isopeptide (Lys-Gly) (interchain with G-Cter in SUMO2) cross-links involve residues lysine 265 and lysine 286. Threonine 289 is subject to Phosphothreonine. Residues lysine 296 and lysine 331 each participate in a glycyl lysine isopeptide (Lys-Gly) (interchain with G-Cter in SUMO2) cross-link. The tail stretch occupies residues 400-469 (ESRLAGDGVG…ASASRRSARN (70 aa)).

The protein belongs to the intermediate filament family. Heterotetramer of two type I and two type II keratins. Interacts with eukaryotic translation initiator factor 3 (eIF3) subunit EIF3S10. Interacts with GPER1. In terms of processing, arg-20 is dimethylated, probably to asymmetric dimethylarginine.

Functionally, blocks interferon-dependent interphase and stimulates DNA synthesis in cells. This chain is Keratin, type II cytoskeletal 7, found in Pan troglodytes (Chimpanzee).